The following is a 131-amino-acid chain: Small ribosomal subunit protein uS11 (131 aa).

This sequence belongs to the universal ribosomal protein uS11 family. Part of the 30S ribosomal subunit. Interacts with proteins S7 and S18. Binds to IF-3.

Functionally, located on the platform of the 30S subunit, it bridges several disparate RNA helices of the 16S rRNA. Forms part of the Shine-Dalgarno cleft in the 70S ribosome. This is Small ribosomal subunit protein uS11 from Endomicrobium trichonymphae.